An 876-amino-acid chain; its full sequence is Exosome complex component 10 homolog (876 aa).

The segment at 1–22 is disordered; the sequence is MSGEESMPDEEQKQSEEEEEMI. The 3'-5' exonuclease domain occupies 279 to 445; the sequence is TMIDTKEKLE…YSYDMLREQL (167 aa). The Mg(2+) site is built by aspartate 303, glutamate 305, aspartate 361, and aspartate 430. The region spanning 489-569 is the HRDC domain; the sequence is NTRQDYALTH…VEARDVKLEK (81 aa). 3 stretches are compositionally biased toward basic and acidic residues: residues 690-730, 741-752, and 834-847; these read EKQE…EFDA, VPDDPNKPKDPE, and KPVR…DPFH. The tract at residues 690–876 is disordered; sequence EKQEEEERKE…NRQGTINYKK (187 aa). Over residues 848 to 861 the composition is skewed to basic residues; that stretch reads QKYRLKNKTKKNMA.

This sequence belongs to the exosome component 10/RRP6 family. As to quaternary structure, component of the RNA exosome complex. Interacts with crn-5. Requires Mg(2+) as cofactor. As to expression, ubiquitously expressed.

The protein localises to the nucleus. Its subcellular location is the nucleolus. It is found in the nucleoplasm. In terms of biological role, catalytic component of the RNA exosome complex which has 3'-&gt;5' exoribonuclease activity and participates in a multitude of cellular RNA processing and degradation events. Involved in apoptotic DNA degradation. Involved in regulation of antisense ribosomal siRNA production. Involved in response to cold-warm shock. The chain is Exosome complex component 10 homolog from Caenorhabditis elegans.